Here is a 372-residue protein sequence, read N- to C-terminus: RNA polymerase sigma factor SigA (372 aa).

Residues 139–209 form a sigma-70 factor domain-2 region; that stretch reads LAEANLRLVV…TRAIADQART (71 aa). Residues 163–166 carry the Interaction with polymerase core subunit RpoC motif; sequence DLIQ. The interval 218–294 is sigma-70 factor domain-3; the sequence is ETINKLIRVQ…DQDALAPSDA (77 aa). The segment at 307–360 is sigma-70 factor domain-4; sequence VLDTLTDREENVLRLRFGLDDGRTRTLEEVGKVFGVTRERIRQIEAKALRKLRH. Positions 333 to 352 form a DNA-binding region, H-T-H motif; the sequence is LEEVGKVFGVTRERIRQIEA.

The protein belongs to the sigma-70 factor family. RpoD/SigA subfamily. As to quaternary structure, interacts transiently with the RNA polymerase catalytic core.

It is found in the cytoplasm. Sigma factors are initiation factors that promote the attachment of RNA polymerase to specific initiation sites and are then released. This sigma factor is the primary sigma factor during exponential growth. This chain is RNA polymerase sigma factor SigA, found in Halalkalibacterium halodurans (strain ATCC BAA-125 / DSM 18197 / FERM 7344 / JCM 9153 / C-125) (Bacillus halodurans).